The chain runs to 269 residues: Probable cytochrome c oxidase subunit 2 (269 aa).

Helical transmembrane passes span I8–W28, L50–I70, and I87–P107. Cu cation-binding residues include H189, C224, C228, and H232.

It belongs to the cytochrome c oxidase subunit 2 family. The cofactor is Cu cation. It depends on heme as a cofactor.

Its subcellular location is the cell membrane. The enzyme catalyses 4 Fe(II)-[cytochrome c] + O2 + 8 H(+)(in) = 4 Fe(III)-[cytochrome c] + 2 H2O + 4 H(+)(out). Subunits I and II form the functional core of the enzyme complex. Electrons originating in cytochrome c are transferred via heme a and Cu(A) to the binuclear center formed by heme a3 and Cu(B). The sequence is that of Probable cytochrome c oxidase subunit 2 (ctaC) from Rickettsia bellii (strain RML369-C).